The sequence spans 140 residues: Cytochrome b (140 aa).

The chain crosses the membrane as a helical span at residues 38–58 (FFALHFLLPFVLAALVIMHLI). Heme b-binding residues include His42 and His56. His61 is an a ubiquinone binding site. A helical transmembrane segment spans residues 85–105 (FVFKDLVTIFIFFIVLSIFVF).

Belongs to the cytochrome b family. Fungal cytochrome b-c1 complex contains 10 subunits; 3 respiratory subunits, 2 core proteins and 5 low-molecular weight proteins. Cytochrome b-c1 complex is a homodimer. The cofactor is heme b.

The protein localises to the mitochondrion inner membrane. Component of the ubiquinol-cytochrome c reductase complex (complex III or cytochrome b-c1 complex) that is part of the mitochondrial respiratory chain. The b-c1 complex mediates electron transfer from ubiquinol to cytochrome c. Contributes to the generation of a proton gradient across the mitochondrial membrane that is then used for ATP synthesis. The chain is Cytochrome b (cob) from Aspergillus terreus.